Consider the following 994-residue polypeptide: Alpha-mannosidase F (994 aa).

A signal peptide spans 1–20 (MKNFYYFILILLFFNEVCYS). Zn(2+) is bound by residues histidine 35, aspartate 37, and aspartate 151. The Nucleophile role is filled by aspartate 151. N-linked (GlcNAc...) asparagine glycosylation is found at asparagine 247 and asparagine 381. Histidine 392 is a Zn(2+) binding site. Residues asparagine 554, asparagine 712, and asparagine 932 are each glycosylated (N-linked (GlcNAc...) asparagine).

The protein belongs to the glycosyl hydrolase 38 family. It depends on Zn(2+) as a cofactor.

It localises to the secreted. It carries out the reaction Hydrolysis of terminal, non-reducing alpha-D-mannose residues in alpha-D-mannosides.. In Dictyostelium discoideum (Social amoeba), this protein is Alpha-mannosidase F (manF).